Reading from the N-terminus, the 433-residue chain is 4-hydroxy-3-methylbut-2-en-1-yl diphosphate synthase (flavodoxin) (433 aa).

The segment covering 1–13 (MNKPETVTENSLA) has biased composition (polar residues). The disordered stretch occupies residues 1 to 23 (MNKPETVTENSLASDVAGPAPRH). 4 residues coordinate [4Fe-4S] cluster: Cys-314, Cys-317, Cys-360, and Glu-367.

Belongs to the IspG family. [4Fe-4S] cluster is required as a cofactor.

The catalysed reaction is (2E)-4-hydroxy-3-methylbut-2-enyl diphosphate + oxidized [flavodoxin] + H2O + 2 H(+) = 2-C-methyl-D-erythritol 2,4-cyclic diphosphate + reduced [flavodoxin]. It participates in isoprenoid biosynthesis; isopentenyl diphosphate biosynthesis via DXP pathway; isopentenyl diphosphate from 1-deoxy-D-xylulose 5-phosphate: step 5/6. Converts 2C-methyl-D-erythritol 2,4-cyclodiphosphate (ME-2,4cPP) into 1-hydroxy-2-methyl-2-(E)-butenyl 4-diphosphate. In Bradyrhizobium sp. (strain ORS 278), this protein is 4-hydroxy-3-methylbut-2-en-1-yl diphosphate synthase (flavodoxin).